The chain runs to 384 residues: Lipid-A-disaccharide synthase 1 (384 aa).

The protein belongs to the LpxB family.

It carries out the reaction a lipid X + a UDP-2-N,3-O-bis[(3R)-3-hydroxyacyl]-alpha-D-glucosamine = a lipid A disaccharide + UDP + H(+). It participates in bacterial outer membrane biogenesis; LPS lipid A biosynthesis. Functionally, condensation of UDP-2,3-diacylglucosamine and 2,3-diacylglucosamine-1-phosphate to form lipid A disaccharide, a precursor of lipid A, a phosphorylated glycolipid that anchors the lipopolysaccharide to the outer membrane of the cell. This Legionella pneumophila subsp. pneumophila (strain Philadelphia 1 / ATCC 33152 / DSM 7513) protein is Lipid-A-disaccharide synthase 1.